Consider the following 438-residue polypeptide: Na(+)/H(+) antiporter NhaA 2 (438 aa).

11 helical membrane-spanning segments follow: residues serine 21 to tryptophan 41, leucine 66 to leucine 86, methionine 102 to isoleucine 122, lysine 130 to leucine 150, isoleucine 160 to phenylalanine 180, glycine 183 to glycine 203, leucine 206 to leucine 226, tryptophan 308 to leucine 328, leucine 341 to isoleucine 361, tryptophan 376 to isoleucine 396, and alanine 410 to serine 430.

The protein belongs to the NhaA Na(+)/H(+) (TC 2.A.33) antiporter family.

The protein localises to the cell inner membrane. It catalyses the reaction Na(+)(in) + 2 H(+)(out) = Na(+)(out) + 2 H(+)(in). Functionally, na(+)/H(+) antiporter that extrudes sodium in exchange for external protons. In Syntrophotalea carbinolica (strain DSM 2380 / NBRC 103641 / GraBd1) (Pelobacter carbinolicus), this protein is Na(+)/H(+) antiporter NhaA 2.